The chain runs to 139 residues: Mitochondrial intermembrane space import and assembly protein 40 (139 aa).

Intrachain disulfides connect Cys53–Cys55, Cys64–Cys97, and Cys74–Cys87. Residues 61–105 enclose the CHCH domain; sequence SGPCGEQFKSAFSCFHYSTEDIKGSDCIDQFRAMQECMQKYPDLY. Short sequence motifs (cx9C motif) lie at residues 64–74 and 87–97; these read CGEQFKSAFSC and CIDQFRAMQEC. The disordered stretch occupies residues 102-139; that stretch reads PDLYPQDEEEEEEAKPVEPVEETADTKVSAAKEQGTSS. Residues 106–124 show a composition bias toward acidic residues; the sequence is PQDEEEEEEAKPVEPVEET.

Monomer. Can form homooligomers. Interacts with GFER and forms transient disulfide bonds with GFER. Interacts with MICU1. Interacts with COX19 forming transient intermolecular disulfide bridges. Interacts with COA7 through transient intermolecular disulfide bonds. Interacts with AIFM1; the interaction increases in presence of NADH. Interacts with NDUFB10. In terms of processing, forms intrachain disulfide bridges, but exists in different redox states. In terms of tissue distribution, widely expressed. Present at high level in liver and kidney, followed by lung, brain, heart and spleen (at protein level).

It is found in the mitochondrion intermembrane space. Its function is as follows. Central component of a redox-sensitive mitochondrial intermembrane space import machinery which is required for the biogenesis of respiratory chain complexes. Functions as chaperone and catalyzes the formation of disulfide bonds in substrate proteins, such as COX17, COX19, MICU1 and COA7. Required for the import and folding of small cysteine-containing proteins (small Tim) in the mitochondrial intermembrane space (IMS). Required for the import of COA7 in the IMS. Precursor proteins to be imported into the IMS are translocated in their reduced form into the mitochondria. The oxidized form of CHCHD4/MIA40 forms a transient intermolecular disulfide bridge with the reduced precursor protein, resulting in oxidation of the precursor protein that now contains an intramolecular disulfide bond and is able to undergo folding in the IMS. Reduced CHCHD4/MIA40 is then reoxidized by GFER/ERV1 via a disulfide relay system. Mediates formation of disulfide bond in MICU1 in the IMS, promoting formation of the MICU1-MICU2 heterodimer that regulates mitochondrial calcium uptake. This Mus musculus (Mouse) protein is Mitochondrial intermembrane space import and assembly protein 40 (Chchd4).